A 334-amino-acid polypeptide reads, in one-letter code: Anthranilate phosphoribosyltransferase (334 aa).

5-phospho-alpha-D-ribose 1-diphosphate contacts are provided by residues glycine 79, 82 to 83, serine 87, 89 to 92, 107 to 115, and serine 119; these read GD, NIST, and KAGNRSISS. Residue glycine 79 participates in anthranilate binding. Serine 91 is a binding site for Mg(2+). Anthranilate is bound at residue asparagine 110. Arginine 165 serves as a coordination point for anthranilate. Residues aspartate 224 and glutamate 225 each contribute to the Mg(2+) site.

The protein belongs to the anthranilate phosphoribosyltransferase family. As to quaternary structure, homodimer. Mg(2+) is required as a cofactor.

The enzyme catalyses N-(5-phospho-beta-D-ribosyl)anthranilate + diphosphate = 5-phospho-alpha-D-ribose 1-diphosphate + anthranilate. Its pathway is amino-acid biosynthesis; L-tryptophan biosynthesis; L-tryptophan from chorismate: step 2/5. Catalyzes the transfer of the phosphoribosyl group of 5-phosphorylribose-1-pyrophosphate (PRPP) to anthranilate to yield N-(5'-phosphoribosyl)-anthranilate (PRA). This Streptococcus thermophilus (strain ATCC BAA-491 / LMD-9) protein is Anthranilate phosphoribosyltransferase.